The sequence spans 262 residues: Hydroxyethylthiazole kinase (262 aa).

A substrate-binding site is contributed by Met-50. ATP is bound by residues Arg-125 and Thr-171. Gly-198 serves as a coordination point for substrate.

It belongs to the Thz kinase family. Mg(2+) is required as a cofactor.

It catalyses the reaction 5-(2-hydroxyethyl)-4-methylthiazole + ATP = 4-methyl-5-(2-phosphooxyethyl)-thiazole + ADP + H(+). Its pathway is cofactor biosynthesis; thiamine diphosphate biosynthesis; 4-methyl-5-(2-phosphoethyl)-thiazole from 5-(2-hydroxyethyl)-4-methylthiazole: step 1/1. In terms of biological role, catalyzes the phosphorylation of the hydroxyl group of 4-methyl-5-beta-hydroxyethylthiazole (THZ). The polypeptide is Hydroxyethylthiazole kinase (Escherichia coli O7:K1 (strain IAI39 / ExPEC)).